A 180-amino-acid chain; its full sequence is Ribulose bisphosphate carboxylase small subunit, chloroplastic (180 aa).

The N-terminal 56 residues, 1–56, are a transit peptide targeting the chloroplast; that stretch reads MASSVLSSAAVATRSNVAQANMVAPFTGLKSAASFPVSRKQNLDITSIASNGGRVQ.

This sequence belongs to the RuBisCO small chain family. As to quaternary structure, heterohexadecamer of 8 large and 8 small subunits.

The protein resides in the plastid. The protein localises to the chloroplast. Functionally, ruBisCO catalyzes two reactions: the carboxylation of D-ribulose 1,5-bisphosphate, the primary event in carbon dioxide fixation, as well as the oxidative fragmentation of the pentose substrate. Both reactions occur simultaneously and in competition at the same active site. Although the small subunit is not catalytic it is essential for maximal activity. The polypeptide is Ribulose bisphosphate carboxylase small subunit, chloroplastic (Nicotiana plumbaginifolia (Leadwort-leaved tobacco)).